We begin with the raw amino-acid sequence, 229 residues long: Flagellar L-ring protein (229 aa).

A signal peptide spans 1-25 (MKQVRLPSSATVRAACAVAVAALAG). Residue cysteine 26 is the site of N-palmitoyl cysteine attachment. The S-diacylglycerol cysteine moiety is linked to residue cysteine 26.

Belongs to the FlgH family. As to quaternary structure, the basal body constitutes a major portion of the flagellar organelle and consists of four rings (L,P,S, and M) mounted on a central rod.

It is found in the cell outer membrane. Its subcellular location is the bacterial flagellum basal body. Functionally, assembles around the rod to form the L-ring and probably protects the motor/basal body from shearing forces during rotation. This chain is Flagellar L-ring protein, found in Burkholderia orbicola (strain AU 1054).